The chain runs to 405 residues: GTPase Obg (405 aa).

The Obg domain maps to Met1–Leu159. Positions Asn127–Asp148 are disordered. The span at Arg129–Pro143 shows a compositional bias: polar residues. The 174-residue stretch at Ala160 to Asp333 folds into the OBG-type G domain. GTP contacts are provided by residues Gly166–Ser173, Phe191–Val195, Asp213–Gly216, Asn283–Asp286, and Ser314–Leu316. Residues Ser173 and Thr193 each contribute to the Mg(2+) site. Residues Leu373–Arg405 form a disordered region. The segment covering Glu383–Gly398 has biased composition (acidic residues).

The protein belongs to the TRAFAC class OBG-HflX-like GTPase superfamily. OBG GTPase family. As to quaternary structure, monomer. It depends on Mg(2+) as a cofactor.

It is found in the cytoplasm. Functionally, an essential GTPase which binds GTP, GDP and possibly (p)ppGpp with moderate affinity, with high nucleotide exchange rates and a fairly low GTP hydrolysis rate. Plays a role in control of the cell cycle, stress response, ribosome biogenesis and in those bacteria that undergo differentiation, in morphogenesis control. The sequence is that of GTPase Obg from Stutzerimonas stutzeri (strain A1501) (Pseudomonas stutzeri).